The primary structure comprises 391 residues: UPF0229 protein BAA_0633 (391 aa).

The segment covering 1–16 has biased composition (polar residues); it reads MGEENQPNYTISQENW. 2 disordered regions span residues 1 to 31 and 80 to 117; these read MGEE…RHQE and HVGQ…GDAA. Positions 21–31 are enriched in basic and acidic residues; that stretch reads KGYDDQQRHQE. Positions 98–115 are enriched in gly residues; sequence GSGGQKQKGPGKGQGAGD.

Belongs to the UPF0229 family.

This is UPF0229 protein BAA_0633 from Bacillus anthracis (strain A0248).